We begin with the raw amino-acid sequence, 281 residues long: Digeranylgeranylglyceryl phosphate synthase (281 aa).

5 consecutive transmembrane segments (helical) span residues Ile88–Ile108, Ala132–Leu152, Gly200–Phe220, Ile225–Ile245, and Leu261–Val281.

It belongs to the UbiA prenyltransferase family. DGGGP synthase subfamily. The cofactor is Mg(2+).

The protein resides in the cell membrane. The catalysed reaction is sn-3-O-(geranylgeranyl)glycerol 1-phosphate + (2E,6E,10E)-geranylgeranyl diphosphate = 2,3-bis-O-(geranylgeranyl)-sn-glycerol 1-phosphate + diphosphate. Its pathway is membrane lipid metabolism; glycerophospholipid metabolism. Functionally, prenyltransferase that catalyzes the transfer of the geranylgeranyl moiety of geranylgeranyl diphosphate (GGPP) to the C2 hydroxyl of (S)-3-O-geranylgeranylglyceryl phosphate (GGGP). This reaction is the second ether-bond-formation step in the biosynthesis of archaeal membrane lipids. The protein is Digeranylgeranylglyceryl phosphate synthase of Korarchaeum cryptofilum (strain OPF8).